The following is a 478-amino-acid chain: ATP synthase subunit beta (478 aa).

Residue 158–165 (GGAGVGKT) participates in ATP binding.

Belongs to the ATPase alpha/beta chains family. As to quaternary structure, F-type ATPases have 2 components, CF(1) - the catalytic core - and CF(0) - the membrane proton channel. CF(1) has five subunits: alpha(3), beta(3), gamma(1), delta(1), epsilon(1). CF(0) has three main subunits: a(1), b(2) and c(9-12). The alpha and beta chains form an alternating ring which encloses part of the gamma chain. CF(1) is attached to CF(0) by a central stalk formed by the gamma and epsilon chains, while a peripheral stalk is formed by the delta and b chains.

It is found in the cell inner membrane. It carries out the reaction ATP + H2O + 4 H(+)(in) = ADP + phosphate + 5 H(+)(out). In terms of biological role, produces ATP from ADP in the presence of a proton gradient across the membrane. The catalytic sites are hosted primarily by the beta subunits. In Rhizobium leguminosarum bv. trifolii (strain WSM2304), this protein is ATP synthase subunit beta.